The sequence spans 222 residues: UPF0502 protein XCV4380 (222 aa).

Belongs to the UPF0502 family.

The polypeptide is UPF0502 protein XCV4380 (Xanthomonas euvesicatoria pv. vesicatoria (strain 85-10) (Xanthomonas campestris pv. vesicatoria)).